The chain runs to 138 residues: Putative pre-16S rRNA nuclease (138 aa).

It belongs to the YqgF nuclease family.

The protein localises to the cytoplasm. Its function is as follows. Could be a nuclease involved in processing of the 5'-end of pre-16S rRNA. This is Putative pre-16S rRNA nuclease (yrrK) from Bacillus subtilis (strain 168).